Consider the following 861-residue polypeptide: Translation initiation factor IF-2 (861 aa).

Disordered stretches follow at residues 1–69 and 92–273; these read MSDA…GESA and ARAR…GREK. Gly residues predominate over residues 53-65; the sequence is GGPGGKQGGGAKG. Basic and acidic residues predominate over residues 94–108; that stretch reads ARAEAADREAQKKQD. Over residues 109 to 120 the composition is skewed to low complexity; the sequence is AAAMAQRAASEQ. Basic and acidic residues-rich tracts occupy residues 121–155 and 163–186; these read RQLEEQRERVAREAREAEEAAQKAIEDEARLKAEA and DSGRKRDDESSRRRPPAKDEKRTP. A compositionally biased stretch (low complexity) spans 213 to 223; it reads PGPAAKQQPAR. Basic and acidic residues predominate over residues 255 to 273; sequence RAREREKQRRQDTSGGREK. The tr-type G domain maps to 357–527; sequence PRAPVIAVMG…ALQAELLDLK (171 aa). The tract at residues 366-373 is G1; sequence GHVDHGKT. 366–373 lines the GTP pocket; sequence GHVDHGKT. The segment at 391–395 is G2; sequence GITQH. The interval 413–416 is G3; sequence DTPG. Residues 413 to 417 and 467 to 470 each bind GTP; these read DTPGH and NKCD. The G4 stretch occupies residues 467-470; that stretch reads NKCD. Positions 503–505 are G5; the sequence is SAK.

Belongs to the TRAFAC class translation factor GTPase superfamily. Classic translation factor GTPase family. IF-2 subfamily.

The protein resides in the cytoplasm. Functionally, one of the essential components for the initiation of protein synthesis. Protects formylmethionyl-tRNA from spontaneous hydrolysis and promotes its binding to the 30S ribosomal subunits. Also involved in the hydrolysis of GTP during the formation of the 70S ribosomal complex. The chain is Translation initiation factor IF-2 from Maricaulis maris (strain MCS10) (Caulobacter maris).